The chain runs to 61 residues: Large ribosomal subunit protein uL30 (61 aa).

The protein belongs to the universal ribosomal protein uL30 family. In terms of assembly, part of the 50S ribosomal subunit.

This is Large ribosomal subunit protein uL30 from Maricaulis maris (strain MCS10) (Caulobacter maris).